Consider the following 371-residue polypeptide: L-lysine 4-hydroxylase (371 aa).

Fe cation-binding residues include His174, Glu176, and His310.

The protein belongs to the clavaminate synthase family. It depends on Fe(2+) as a cofactor.

The catalysed reaction is L-lysine + 2-oxoglutarate + O2 = (4R)-4-hydroxy-L-lysine + succinate + CO2. Alpha-ketoglutarate-dependent dioxygenase that in vitro catalyzes the regio- and stereoselective hydroxylation of L-lysine, leading to (4R)-4-hydroxy-L-lysine. The sequence is that of L-lysine 4-hydroxylase from Niastella koreensis (strain DSM 17620 / KACC 11465 / NBRC 106392 / GR20-10).